Here is a 150-residue protein sequence, read N- to C-terminus: Prolamin PPROL 14E (150 aa).

An N-terminal signal peptide occupies residues 1-19 (MKIIFVFALLAIAACSASA). Gln-20 is modified (pyrrolidone carboxylic acid).

It belongs to the prolamin family.

It localises to the vacuole. It is found in the aleurone grain. In terms of biological role, seed storage protein; serves as a source of nitrogen, carbon and sulfur for the young developing seedling. In Oryza sativa subsp. indica (Rice), this protein is Prolamin PPROL 14E.